A 465-amino-acid polypeptide reads, in one-letter code: MSEAVPTSARKSKNAPVAPGPAPVLEIESLDMEARGVGRTVTEDGTPGKVIFVEGALPGERVTYSSYRRKPSYEQATVVDILRPSVLRTQPKCAFFGTCGGCSMQHLDMRAQVAIKQRVLEDNLWHLAKLRAETVFAPIHGPSWGYRYRARLTVRNVAKKGGVLVGFHEKKSSYVADMTSCEVLPPHVSAMLVPLRRLVEGLSIRDRMPQIELAVGSQVTALVLRVLEPINADDEALLRAFADEHKVQFWLQPKGPDTVTPFYPLDVPLDYTLPEFGIRMPFKPTDFTQVNHQINRVLVGRALRLLAPSRDDRVLDLFCGIGNFTLPLARLSREVMGIEGSDTLTTRALANARENGVDGHTTFACRNLFEVTGDDLRALGAFDKFLIDPPREGALAVSKALAEIAQSGEGPLPKRIVYVSCNPSTLARDAGLLVHEAGYRLKGAGVVNMFPNTSHVESIALFERG.

The tract at residues 1–22 (MSEAVPTSARKSKNAPVAPGPA) is disordered. One can recognise a TRAM domain in the interval 16–80 (PVAPGPAPVL…PSYEQATVVD (65 aa)). Residues Cys-93, Cys-99, Cys-102, and Cys-181 each contribute to the [4Fe-4S] cluster site. Gln-289, Phe-318, Asn-323, Glu-339, Asn-367, and Asp-388 together coordinate S-adenosyl-L-methionine. The active-site Nucleophile is the Cys-421.

The protein belongs to the class I-like SAM-binding methyltransferase superfamily. RNA M5U methyltransferase family. RlmD subfamily.

The catalysed reaction is uridine(1939) in 23S rRNA + S-adenosyl-L-methionine = 5-methyluridine(1939) in 23S rRNA + S-adenosyl-L-homocysteine + H(+). Its function is as follows. Catalyzes the formation of 5-methyl-uridine at position 1939 (m5U1939) in 23S rRNA. The sequence is that of 23S rRNA (uracil(1939)-C(5))-methyltransferase RlmD from Burkholderia ambifaria (strain ATCC BAA-244 / DSM 16087 / CCUG 44356 / LMG 19182 / AMMD) (Burkholderia cepacia (strain AMMD)).